The sequence spans 262 residues: Phosphoribosylformylglycinamidine synthase subunit PurQ (262 aa).

The Glutamine amidotransferase type-1 domain occupies 2–238; that stretch reads RIAVIQFPGT…FAWQLPRKHP (237 aa). The active-site Nucleophile is the C87. Catalysis depends on residues H223 and E225.

In terms of assembly, part of the FGAM synthase complex composed of 1 PurL, 1 PurQ and 2 PurS subunits.

The protein localises to the cytoplasm. It catalyses the reaction N(2)-formyl-N(1)-(5-phospho-beta-D-ribosyl)glycinamide + L-glutamine + ATP + H2O = 2-formamido-N(1)-(5-O-phospho-beta-D-ribosyl)acetamidine + L-glutamate + ADP + phosphate + H(+). The enzyme catalyses L-glutamine + H2O = L-glutamate + NH4(+). It participates in purine metabolism; IMP biosynthesis via de novo pathway; 5-amino-1-(5-phospho-D-ribosyl)imidazole from N(2)-formyl-N(1)-(5-phospho-D-ribosyl)glycinamide: step 1/2. Part of the phosphoribosylformylglycinamidine synthase complex involved in the purines biosynthetic pathway. Catalyzes the ATP-dependent conversion of formylglycinamide ribonucleotide (FGAR) and glutamine to yield formylglycinamidine ribonucleotide (FGAM) and glutamate. The FGAM synthase complex is composed of three subunits. PurQ produces an ammonia molecule by converting glutamine to glutamate. PurL transfers the ammonia molecule to FGAR to form FGAM in an ATP-dependent manner. PurS interacts with PurQ and PurL and is thought to assist in the transfer of the ammonia molecule from PurQ to PurL. This Methanothrix thermoacetophila (strain DSM 6194 / JCM 14653 / NBRC 101360 / PT) (Methanosaeta thermophila) protein is Phosphoribosylformylglycinamidine synthase subunit PurQ.